The chain runs to 309 residues: Olfactory receptor 8U9 (309 aa).

Residues 1 to 28 (MTQINCTQVTEFILVGLTDRQELKMPLF) are Extracellular-facing. A glycan (N-linked (GlcNAc...) asparagine) is linked at Asn5. The chain crosses the membrane as a helical span at residues 29 to 49 (VLFLSIYLFTVVGNLGLILLI). The Cytoplasmic segment spans residues 50-56 (RTDEKLN). A helical membrane pass occupies residues 57 to 77 (TPMYFFLSNLAFVDFCYSSVI). Over 78–97 (TPKMLGNFLYKQNSISFNAC) the chain is Extracellular. An intrachain disulfide couples Cys97 to Cys179. Residues 98-118 (AAQLGCFLAFMTAECLLLASM) form a helical membrane-spanning segment. Residues 119–143 (AYDRYVAICNPLMYMVVMSPGICIQ) lie on the Cytoplasmic side of the membrane. Residues 144–164 (LVAAPHSYSILVALFHTILTF) traverse the membrane as a helical segment. Over 165–204 (RLSYCHSNIVNHFYCDDMPLLRLTCSDTRFKQLWIFACAG) the chain is Extracellular. Residues 205 to 225 (IMFISSLLIVFVSYMFIISAI) form a helical membrane-spanning segment. At 226 to 239 (LRMHSAEGRQKAFS) the chain is on the cytoplasmic side. Residues 240 to 260 (TCGSHMLAVTIFYGTLIFMYL) form a helical membrane-spanning segment. Residues 261–272 (QPSSSHALDTDK) are Extracellular-facing. The chain crosses the membrane as a helical span at residues 273 to 293 (MASVFYTVIIPMLNPLIYSLQ). The Cytoplasmic segment spans residues 294–309 (NKEVKEALKKIIINKN).

This sequence belongs to the G-protein coupled receptor 1 family.

It is found in the cell membrane. Its function is as follows. Odorant receptor. The polypeptide is Olfactory receptor 8U9 (OR8U9) (Homo sapiens (Human)).